We begin with the raw amino-acid sequence, 194 residues long: Probable GTP-binding protein EngB (194 aa).

The EngB-type G domain occupies 22–194 (DLPEFALAGR…KFWDWIEDKM (173 aa)). GTP contacts are provided by residues 30–37 (GRSNVGKS), 57–61 (GKTQT), 75–78 (DVPG), 142–145 (TKMD), and 175–177 (FSS). Residues serine 37 and threonine 59 each coordinate Mg(2+).

This sequence belongs to the TRAFAC class TrmE-Era-EngA-EngB-Septin-like GTPase superfamily. EngB GTPase family. Mg(2+) is required as a cofactor.

Necessary for normal cell division and for the maintenance of normal septation. The protein is Probable GTP-binding protein EngB of Lactobacillus gasseri (strain ATCC 33323 / DSM 20243 / BCRC 14619 / CIP 102991 / JCM 1131 / KCTC 3163 / NCIMB 11718 / NCTC 13722 / AM63).